A 205-amino-acid polypeptide reads, in one-letter code: uncharacterized protein (205 aa).

The tract at residues 1 to 42 (MSRKRDKPYTNRHTPARISKRRRPWAPSSSEHDEIIDKPITK) is disordered. The span at 14-24 (TPARISKRRRP) shows a compositional bias: basic residues. Basic and acidic residues predominate over residues 30–40 (SEHDEIIDKPI). An RRM domain is found at 47-122 (PALVVMGLPA…KKLEVVWATD (76 aa)). Residues 170–191 (PRSDNTKGISGDGGISSPATTS) are disordered.

This is an uncharacterized protein from Arabidopsis thaliana (Mouse-ear cress).